We begin with the raw amino-acid sequence, 482 residues long: Aspartyl/glutamyl-tRNA(Asn/Gln) amidotransferase subunit B (482 aa).

It belongs to the GatB/GatE family. GatB subfamily. As to quaternary structure, heterotrimer of A, B and C subunits.

The enzyme catalyses L-glutamyl-tRNA(Gln) + L-glutamine + ATP + H2O = L-glutaminyl-tRNA(Gln) + L-glutamate + ADP + phosphate + H(+). It carries out the reaction L-aspartyl-tRNA(Asn) + L-glutamine + ATP + H2O = L-asparaginyl-tRNA(Asn) + L-glutamate + ADP + phosphate + 2 H(+). In terms of biological role, allows the formation of correctly charged Asn-tRNA(Asn) or Gln-tRNA(Gln) through the transamidation of misacylated Asp-tRNA(Asn) or Glu-tRNA(Gln) in organisms which lack either or both of asparaginyl-tRNA or glutaminyl-tRNA synthetases. The reaction takes place in the presence of glutamine and ATP through an activated phospho-Asp-tRNA(Asn) or phospho-Glu-tRNA(Gln). The sequence is that of Aspartyl/glutamyl-tRNA(Asn/Gln) amidotransferase subunit B from Azotobacter vinelandii (strain DJ / ATCC BAA-1303).